Reading from the N-terminus, the 314-residue chain is Solute carrier family 25 member 44 (314 aa).

Solcar repeat units follow at residues 18–100, 107–210, and 220–302; these read KKFY…TRKF, SNTV…YAEQ, and PHIV…LKKL. The next 6 helical transmembrane spans lie at 20 to 42, 71 to 90, 113 to 133, 185 to 201, 222 to 239, and 278 to 296; these read FYVF…TLIR, TGLY…GQCY, LVAG…IDVV, GYVA…AVWW, IVFQ…ASIL, and LSAR…VVGY.

Belongs to the mitochondrial carrier (TC 2.A.29) family.

It localises to the mitochondrion membrane. The enzyme catalyses L-valine(in) = L-valine(out). It carries out the reaction L-leucine(in) = L-leucine(out). Functionally, mitochondrial solute transporter which transports branched-chain amino acid (BCAA; valine, leucine and isoleucine) into mitochondria in brown adipose tissue (BAT). BAT is involved in BCAA catabolism and actively utilizes BCAA in the mitochondria for thermogenesis. This is Solute carrier family 25 member 44 from Homo sapiens (Human).